The sequence spans 364 residues: Spermidine/putrescine import ATP-binding protein PotA (364 aa).

An ABC transporter domain is found at 5–235 (LSFKSVSKQY…PVNRFVADFI (231 aa)). Residue 37–44 (GPSGCGKT) coordinates ATP.

The protein belongs to the ABC transporter superfamily. Spermidine/putrescine importer (TC 3.A.1.11.1) family. In terms of assembly, the complex is composed of two ATP-binding proteins (PotA), two transmembrane proteins (PotB and PotC) and a solute-binding protein (PotD).

It localises to the cell membrane. The catalysed reaction is ATP + H2O + polyamine-[polyamine-binding protein]Side 1 = ADP + phosphate + polyamineSide 2 + [polyamine-binding protein]Side 1.. In terms of biological role, part of the ABC transporter complex PotABCD involved in spermidine/putrescine import. Responsible for energy coupling to the transport system. The polypeptide is Spermidine/putrescine import ATP-binding protein PotA (Staphylococcus saprophyticus subsp. saprophyticus (strain ATCC 15305 / DSM 20229 / NCIMB 8711 / NCTC 7292 / S-41)).